The following is a 301-amino-acid chain: Homeobox protein Nkx-2.6 (301 aa).

The tract at residues Glu-22–Pro-135 is disordered. The segment at residues Arg-132 to Arg-191 is a DNA-binding region (homeobox).

It belongs to the NK-2 homeobox family.

Its subcellular location is the nucleus. Functionally, acts as a transcriptional activator. In conjunction with NKX2-5, may play a role in both pharyngeal and cardiac embryonic development. The sequence is that of Homeobox protein Nkx-2.6 (NKX2-6) from Homo sapiens (Human).